A 568-amino-acid chain; its full sequence is Pentatricopeptide repeat-containing protein At1g73400, mitochondrial (568 aa).

Residues 1 to 55 (MMRRLVSYFVRSRFSLHLSTTPPQRSALFSHILSSHLDSIQINKKISSFSVHRFC) constitute a mitochondrion transit peptide. 8 PPR repeats span residues 233 to 263 (EINA…MRHR), 267 to 301 (DANT…GHKP), 302 to 336 (ENFT…GSAV), 340 to 374 (TAKT…GCLP), 375 to 409 (DVST…GYPP), 410 to 444 (DIVT…RCAP), 445 to 479 (SVQT…DCVQ), and 480 to 514 (DVET…GLKL).

Belongs to the PPR family. P subfamily.

It localises to the mitochondrion. This Arabidopsis thaliana (Mouse-ear cress) protein is Pentatricopeptide repeat-containing protein At1g73400, mitochondrial.